The chain runs to 469 residues: GTPase Der (469 aa).

EngA-type G domains lie at 30 to 193 and 203 to 376; these read PVLA…PEVA and RRVA…ASWD. GTP is bound by residues 36-43, 83-87, 145-148, 209-216, 256-260, and 321-324; these read GRPNVGKS, DTGGW, NKVD, GKPNVGKS, DTAGL, and NKWD. Positions 377 to 459 constitute a KH-like domain; sequence TRIPTGPLNS…PIRINVRVRE (83 aa).

This sequence belongs to the TRAFAC class TrmE-Era-EngA-EngB-Septin-like GTPase superfamily. EngA (Der) GTPase family. In terms of assembly, associates with the 50S ribosomal subunit.

Functionally, GTPase that plays an essential role in the late steps of ribosome biogenesis. The protein is GTPase Der of Mycobacterium ulcerans (strain Agy99).